Here is a 575-residue protein sequence, read N- to C-terminus: Suppressor of tumorigenicity 7 protein-like (575 aa).

Helical transmembrane passes span 36 to 56 (GLAG…LYAL) and 80 to 100 (FYVA…IFEW). Residues 125–147 (GTESSISEPGSPSRNRENETSRQ) form a disordered region. Residues 126–137 (TESSISEPGSPS) are compositionally biased toward polar residues.

The protein belongs to the ST7 family.

The protein resides in the membrane. This is Suppressor of tumorigenicity 7 protein-like (ST7L) from Homo sapiens (Human).